A 246-amino-acid polypeptide reads, in one-letter code: 3-deoxy-manno-octulosonate cytidylyltransferase (246 aa).

The protein belongs to the KdsB family.

The protein resides in the cytoplasm. It catalyses the reaction 3-deoxy-alpha-D-manno-oct-2-ulosonate + CTP = CMP-3-deoxy-beta-D-manno-octulosonate + diphosphate. It participates in nucleotide-sugar biosynthesis; CMP-3-deoxy-D-manno-octulosonate biosynthesis; CMP-3-deoxy-D-manno-octulosonate from 3-deoxy-D-manno-octulosonate and CTP: step 1/1. It functions in the pathway bacterial outer membrane biogenesis; lipopolysaccharide biosynthesis. Its function is as follows. Activates KDO (a required 8-carbon sugar) for incorporation into bacterial lipopolysaccharide in Gram-negative bacteria. The chain is 3-deoxy-manno-octulosonate cytidylyltransferase from Rickettsia massiliae (strain Mtu5).